The chain runs to 59 residues: Dybowskin-1CDYa (59 aa).

Positions Met1–Cys22 are cleaved as a signal peptide. Positions Glu23 to Glu44 are excised as a propeptide.

This sequence belongs to the frog skin active peptide (FSAP) family. Brevinin subfamily. Expressed by the skin glands.

The protein resides in the secreted. Functionally, antimicrobial peptide. Has activity against the Gram-positive bacterium S.aureus (MIC=6 uM) and the Gram-negative bacterium E.coli (MIC=3 uM). Lacks hemolytic activity against human erythrocytes. This chain is Dybowskin-1CDYa, found in Rana dybowskii (Dybovsky's frog).